The primary structure comprises 141 residues: Large ribosomal subunit protein uL11 (141 aa).

This sequence belongs to the universal ribosomal protein uL11 family. As to quaternary structure, part of the ribosomal stalk of the 50S ribosomal subunit. Interacts with L10 and the large rRNA to form the base of the stalk. L10 forms an elongated spine to which L12 dimers bind in a sequential fashion forming a multimeric L10(L12)X complex. Post-translationally, one or more lysine residues are methylated.

Functionally, forms part of the ribosomal stalk which helps the ribosome interact with GTP-bound translation factors. The sequence is that of Large ribosomal subunit protein uL11 from Kosmotoga olearia (strain ATCC BAA-1733 / DSM 21960 / TBF 19.5.1).